Reading from the N-terminus, the 155-residue chain is Nascent polypeptide-associated complex subunit beta (155 aa).

Disordered stretches follow at residues 1–39 (MDQA…DDKK) and 122–155 (QNMQ…SKVE). A compositionally biased stretch (basic residues) spans 21–31 (TPRRKTKKVHK). In terms of domain architecture, NAC-A/B spans 34–99 (GTDDKKLQTS…GEEKELTELV (66 aa)). Residues 125–135 (QKKEGEAKKEG) are compositionally biased toward basic and acidic residues.

The protein belongs to the NAC-beta family. Part of the nascent polypeptide-associated complex (NAC), consisting of EGD2 and EGD1. NAC associates with ribosomes via EGD1.

Its subcellular location is the cytoplasm. The protein resides in the nucleus. In terms of biological role, component of the nascent polypeptide-associated complex (NAC), a dynamic component of the ribosomal exit tunnel, protecting the emerging polypeptides from interaction with other cytoplasmic proteins to ensure appropriate nascent protein targeting. The NAC complex also promotes mitochondrial protein import by enhancing productive ribosome interactions with the outer mitochondrial membrane and blocks the inappropriate interaction of ribosomes translating non-secretory nascent polypeptides with translocation sites in the membrane of the endoplasmic reticulum. EGD1 may act as a transcription factor that exert a negative effect on the expression of several genes that are transcribed by RNA polymerase II. This Coccidioides immitis (strain RS) (Valley fever fungus) protein is Nascent polypeptide-associated complex subunit beta (EGD1).